The following is a 138-amino-acid chain: Small ribosomal subunit protein uS11 (138 aa).

Residues 1 to 12 (MPPKKANAAGPK) are compositionally biased toward low complexity. Residues 1–23 (MPPKKANAAGPKKGQKTRKREKK) form a disordered region. Over residues 13 to 22 (KGQKTRKREK) the composition is skewed to basic residues.

The protein belongs to the universal ribosomal protein uS11 family. As to quaternary structure, part of the 30S ribosomal subunit. Interacts with proteins S7 and S18. Binds to IF-3.

Functionally, located on the platform of the 30S subunit, it bridges several disparate RNA helices of the 16S rRNA. Forms part of the Shine-Dalgarno cleft in the 70S ribosome. This chain is Small ribosomal subunit protein uS11, found in Mycobacterium leprae (strain Br4923).